A 274-amino-acid polypeptide reads, in one-letter code: Penicillin-insensitive murein endopeptidase (274 aa).

The N-terminal stretch at Met1–Ala19 is a signal peptide. Intrachain disulfides connect Cys44-Cys265, Cys187-Cys235, and Cys216-Cys223. 6 residues coordinate Zn(2+): His110, His113, Asp120, Asp147, His150, and His211. A disordered region spans residues Leu228–Cys265.

This sequence belongs to the peptidase M74 family. Dimer. Zn(2+) is required as a cofactor.

Its subcellular location is the periplasm. Its function is as follows. Murein endopeptidase that cleaves the D-alanyl-meso-2,6-diamino-pimelyl amide bond that connects peptidoglycan strands. Likely plays a role in the removal of murein from the sacculus. In Shigella boydii serotype 18 (strain CDC 3083-94 / BS512), this protein is Penicillin-insensitive murein endopeptidase.